Consider the following 351-residue polypeptide: MNGTEGPFFYIPMVNTTGIVRSPYEYPQYYLVNPAAYAILGAYMFFLIIVGFPVNFMTLYVTLEHKKLRTPLNYILLNLAVADLFMVIGGFTTTMYTSMHGYFVLGRLGCNLEGFFATLGGMISLWSLAVLAIERWVVVCKPISNFRFGENHAIMGVSLTWGMALACTVPPLVGWSRYIPEGMQCSCGIDYYTRAEGFNNESFVLYMFFCHFTIPLTIIFFCYGRLLCAVKEAAAAQQESETTQRAEREVTRMVIIMVIGFLVCWLPYASVAWFIFTHQGSEFGPLFMTIPAFFAKSSSIYNPMIYICMNKQFRHCMITTLFCGKNPFEGEEEGASSTKTEASSASSVSPA.

The Extracellular portion of the chain corresponds to 1–36 (MNGTEGPFFYIPMVNTTGIVRSPYEYPQYYLVNPAA). N-linked (GlcNAc...) asparagine glycosylation is found at N2 and N15. The helical transmembrane segment at 37–61 (YAILGAYMFFLIIVGFPVNFMTLYV) threads the bilayer. At 62-73 (TLEHKKLRTPLN) the chain is on the cytoplasmic side. Residues 74–96 (YILLNLAVADLFMVIGGFTTTMY) traverse the membrane as a helical segment. Over 97–110 (TSMHGYFVLGRLGC) the chain is Extracellular. An intrachain disulfide couples C110 to C187. The chain crosses the membrane as a helical span at residues 111–133 (NLEGFFATLGGMISLWSLAVLAI). The 'Ionic lock' involved in activated form stabilization motif lies at 134–136 (ERW). Residues 134-152 (ERWVVVCKPISNFRFGENH) are Cytoplasmic-facing. A helical transmembrane segment spans residues 153-173 (AIMGVSLTWGMALACTVPPLV). Residues 174–202 (GWSRYIPEGMQCSCGIDYYTRAEGFNNES) lie on the Extracellular side of the membrane. Residue N200 is glycosylated (N-linked (GlcNAc...) asparagine). Residues 203–224 (FVLYMFFCHFTIPLTIIFFCYG) traverse the membrane as a helical segment. Residues 225 to 252 (RLLCAVKEAAAAQQESETTQRAEREVTR) lie on the Cytoplasmic side of the membrane. A helical membrane pass occupies residues 253–274 (MVIIMVIGFLVCWLPYASVAWF). Residues 275 to 286 (IFTHQGSEFGPL) are Extracellular-facing. The chain crosses the membrane as a helical span at residues 287 to 308 (FMTIPAFFAKSSSIYNPMIYIC). The residue at position 296 (K296) is an N6-(retinylidene)lysine. Residues 309–351 (MNKQFRHCMITTLFCGKNPFEGEEEGASSTKTEASSASSVSPA) lie on the Cytoplasmic side of the membrane. Residue C323 is the site of S-palmitoyl cysteine attachment. Positions 330-351 (GEEEGASSTKTEASSASSVSPA) are disordered. Over residues 335-351 (ASSTKTEASSASSVSPA) the composition is skewed to low complexity.

It belongs to the G-protein coupled receptor 1 family. Opsin subfamily. Post-translationally, phosphorylated on some or all of the serine and threonine residues present in the C-terminal region. In terms of processing, contains one covalently linked retinal chromophore.

Its subcellular location is the membrane. The protein localises to the cell projection. It is found in the cilium. The protein resides in the photoreceptor outer segment. Functionally, photoreceptor required for image-forming vision at low light intensity. While most salt water fish species use retinal as chromophore, most freshwater fish use 3-dehydroretinal, or a mixture of retinal and 3-dehydroretinal. Light-induced isomerization of 11-cis to all-trans retinal triggers a conformational change that activates signaling via G-proteins. Subsequent receptor phosphorylation mediates displacement of the bound G-protein alpha subunit by arrestin and terminates signaling. The chain is Rhodopsin (rho) from Sargocentron diadema (Crown squirrelfish).